We begin with the raw amino-acid sequence, 270 residues long: Probable 6-oxopurine nucleoside phosphorylase (270 aa).

Phosphate contacts are provided by residues S10 and 48 to 49; that span reads RH. M191 is a binding site for substrate. T192 provides a ligand contact to phosphate. Position 215–217 (215–217) interacts with substrate; sequence NYA.

Belongs to the PNP/MTAP phosphorylase family. MTAP subfamily. Homohexamer. Dimer of a homotrimer.

The enzyme catalyses a purine D-ribonucleoside + phosphate = a purine nucleobase + alpha-D-ribose 1-phosphate. Its pathway is purine metabolism; purine nucleoside salvage. Functionally, purine nucleoside phosphorylase which is highly specific for 6-oxopurine nucleosides. Cleaves guanosine or inosine to respective bases and sugar-1-phosphate molecules. Involved in purine salvage. The sequence is that of Probable 6-oxopurine nucleoside phosphorylase from Korarchaeum cryptofilum (strain OPF8).